A 403-amino-acid polypeptide reads, in one-letter code: Enoyl-[acyl-carrier-protein] reductase [NADH] (403 aa).

NAD(+) contacts are provided by residues 49 to 54 (GASSGY), 75 to 76 (FE), 112 to 113 (DA), and 141 to 142 (LA). Residue Tyr227 participates in substrate binding. Tyr237 serves as the catalytic Proton donor. NAD(+) is bound by residues Lys246 and 276 to 278 (VVT).

This sequence belongs to the TER reductase family. As to quaternary structure, monomer.

It catalyses the reaction a 2,3-saturated acyl-[ACP] + NAD(+) = a (2E)-enoyl-[ACP] + NADH + H(+). It functions in the pathway lipid metabolism; fatty acid biosynthesis. Involved in the final reduction of the elongation cycle of fatty acid synthesis (FAS II). Catalyzes the reduction of a carbon-carbon double bond in an enoyl moiety that is covalently linked to an acyl carrier protein (ACP). The chain is Enoyl-[acyl-carrier-protein] reductase [NADH] from Pseudomonas putida (strain ATCC 47054 / DSM 6125 / CFBP 8728 / NCIMB 11950 / KT2440).